The primary structure comprises 510 residues: NAD(P)H-quinone oxidoreductase subunit 2 B, chloroplastic (510 aa).

A run of 13 helical transmembrane segments spans residues 24-44 (LLLF…GLIL), 57-77 (IPWF…ALLF), 99-119 (IFQF…VEYI), 124-144 (MAIT…MFLC), 149-169 (LITI…LSGY), 183-203 (YLLM…WLYG), 227-247 (PGIL…LSLA), 295-315 (WHLL…LIAI), 323-343 (MLAY…IVGD), 354-374 (YMLF…LFGL), 395-415 (ALSL…AGFF), 428-448 (GLYF…YYYL), and 484-504 (MIVC…IIAI).

Belongs to the complex I subunit 2 family. NDH is composed of at least 16 different subunits, 5 of which are encoded in the nucleus.

It localises to the plastid. The protein resides in the chloroplast thylakoid membrane. It carries out the reaction a plastoquinone + NADH + (n+1) H(+)(in) = a plastoquinol + NAD(+) + n H(+)(out). The catalysed reaction is a plastoquinone + NADPH + (n+1) H(+)(in) = a plastoquinol + NADP(+) + n H(+)(out). NDH shuttles electrons from NAD(P)H:plastoquinone, via FMN and iron-sulfur (Fe-S) centers, to quinones in the photosynthetic chain and possibly in a chloroplast respiratory chain. The immediate electron acceptor for the enzyme in this species is believed to be plastoquinone. Couples the redox reaction to proton translocation, and thus conserves the redox energy in a proton gradient. The chain is NAD(P)H-quinone oxidoreductase subunit 2 B, chloroplastic from Eucalyptus globulus subsp. globulus (Tasmanian blue gum).